The chain runs to 66 residues: ATP synthase protein 8 (66 aa).

The chain crosses the membrane as a helical span at residues 8–24 (TWLMMIMSMFLALFIIF). Lys54 bears the N6-acetyllysine; alternate mark. Position 54 is an N6-succinyllysine; alternate (Lys54). Residue Lys57 is modified to N6-acetyllysine.

The protein belongs to the ATPase protein 8 family. F-type ATPases have 2 components, CF(1) - the catalytic core - and CF(0) - the membrane proton channel. Component of an ATP synthase complex composed of ATP5PB, ATP5MC1, ATP5F1E, ATP5PD, ATP5ME, ATP5PF, ATP5MF, MT-ATP6, MT-ATP8, ATP5F1A, ATP5F1B, ATP5F1D, ATP5F1C, ATP5PO, ATP5MG, ATP5MK and ATP5MJ. Interacts with PRICKLE3.

Its subcellular location is the mitochondrion membrane. Functionally, mitochondrial membrane ATP synthase (F(1)F(0) ATP synthase or Complex V) produces ATP from ADP in the presence of a proton gradient across the membrane which is generated by electron transport complexes of the respiratory chain. F-type ATPases consist of two structural domains, F(1) - containing the extramembraneous catalytic core and F(0) - containing the membrane proton channel, linked together by a central stalk and a peripheral stalk. During catalysis, ATP synthesis in the catalytic domain of F(1) is coupled via a rotary mechanism of the central stalk subunits to proton translocation. Part of the complex F(0) domain. Minor subunit located with subunit a in the membrane. The sequence is that of ATP synthase protein 8 (MT-ATP8) from Cervus elaphus hippelaphus (European red deer).